We begin with the raw amino-acid sequence, 157 residues long: UPF0262 protein RL0614 (157 aa).

It belongs to the UPF0262 family.

The chain is UPF0262 protein RL0614 from Rhizobium johnstonii (strain DSM 114642 / LMG 32736 / 3841) (Rhizobium leguminosarum bv. viciae).